The primary structure comprises 82 residues: UPF0180 protein BAA_1480 (82 aa).

This sequence belongs to the UPF0180 family.

The chain is UPF0180 protein BAA_1480 from Bacillus anthracis (strain A0248).